Consider the following 421-residue polypeptide: tRNA(Ile)-lysidine synthase (421 aa).

Residue 26–31 (SGGADS) coordinates ATP.

Belongs to the tRNA(Ile)-lysidine synthase family.

It localises to the cytoplasm. It catalyses the reaction cytidine(34) in tRNA(Ile2) + L-lysine + ATP = lysidine(34) in tRNA(Ile2) + AMP + diphosphate + H(+). In terms of biological role, ligates lysine onto the cytidine present at position 34 of the AUA codon-specific tRNA(Ile) that contains the anticodon CAU, in an ATP-dependent manner. Cytidine is converted to lysidine, thus changing the amino acid specificity of the tRNA from methionine to isoleucine. In Streptococcus thermophilus (strain CNRZ 1066), this protein is tRNA(Ile)-lysidine synthase.